Here is a 290-residue protein sequence, read N- to C-terminus: 4-hydroxybenzoate octaprenyltransferase (290 aa).

Transmembrane regions (helical) follow at residues 23–43 (IGTL…GKGV), 46–66 (LSIL…GCVV), 99–119 (LFVV…AMTI), 141–161 (LPQF…YAAV), 170–190 (WLLL…YAMV), 213–233 (LIVG…GYLT), 234–254 (QMSG…IHQQ), and 268–288 (AFMD…LSYW).

This sequence belongs to the UbiA prenyltransferase family. Mg(2+) is required as a cofactor.

The protein resides in the cell inner membrane. The enzyme catalyses all-trans-octaprenyl diphosphate + 4-hydroxybenzoate = 4-hydroxy-3-(all-trans-octaprenyl)benzoate + diphosphate. The protein operates within cofactor biosynthesis; ubiquinone biosynthesis. In terms of biological role, catalyzes the prenylation of para-hydroxybenzoate (PHB) with an all-trans polyprenyl group. Mediates the second step in the final reaction sequence of ubiquinone-8 (UQ-8) biosynthesis, which is the condensation of the polyisoprenoid side chain with PHB, generating the first membrane-bound Q intermediate 3-octaprenyl-4-hydroxybenzoate. This chain is 4-hydroxybenzoate octaprenyltransferase, found in Serratia proteamaculans (strain 568).